A 272-amino-acid polypeptide reads, in one-letter code: D-aminoacyl-tRNA deacylase (272 aa).

Belongs to the DtdA deacylase family. As to quaternary structure, monomer. Zn(2+) serves as cofactor.

It catalyses the reaction a D-aminoacyl-tRNA + H2O = a tRNA + a D-alpha-amino acid + H(+). It carries out the reaction glycyl-tRNA(Ala) + H2O = tRNA(Ala) + glycine + H(+). Its function is as follows. D-aminoacyl-tRNA deacylase with broad substrate specificity. By recycling D-aminoacyl-tRNA to D-amino acids and free tRNA molecules, this enzyme counteracts the toxicity associated with the formation of D-aminoacyl-tRNA entities in vivo. The chain is D-aminoacyl-tRNA deacylase from Thermococcus kodakarensis (strain ATCC BAA-918 / JCM 12380 / KOD1) (Pyrococcus kodakaraensis (strain KOD1)).